The following is a 160-amino-acid chain: Protein-export protein SecB (160 aa).

The protein belongs to the SecB family. In terms of assembly, homotetramer, a dimer of dimers. One homotetramer interacts with 1 SecA dimer.

It localises to the cytoplasm. Its function is as follows. One of the proteins required for the normal export of preproteins out of the cell cytoplasm. It is a molecular chaperone that binds to a subset of precursor proteins, maintaining them in a translocation-competent state. It also specifically binds to its receptor SecA. The sequence is that of Protein-export protein SecB from Nitrosomonas eutropha (strain DSM 101675 / C91 / Nm57).